The chain runs to 358 residues: Peptide chain release factor 1 (358 aa).

N5-methylglutamine is present on glutamine 233. Over residues glutamine 282–arginine 306 the composition is skewed to basic and acidic residues. A disordered region spans residues glutamine 282 to tyrosine 308.

It belongs to the prokaryotic/mitochondrial release factor family. In terms of processing, methylated by PrmC. Methylation increases the termination efficiency of RF1.

The protein localises to the cytoplasm. Its function is as follows. Peptide chain release factor 1 directs the termination of translation in response to the peptide chain termination codons UAG and UAA. This Afipia carboxidovorans (strain ATCC 49405 / DSM 1227 / KCTC 32145 / OM5) (Oligotropha carboxidovorans) protein is Peptide chain release factor 1.